A 352-amino-acid chain; its full sequence is Dihydrorhizobitoxine desaturase (352 aa).

The next 3 helical transmembrane spans lie at 53–73, 89–109, and 204–224; these read LATL…IGAY, LAKN…YPLF, and IGIL…LFWI.

It belongs to the fatty acid desaturase type 1 family.

It is found in the cell inner membrane. It catalyses the reaction dihydrorhizobitoxine + 2 reduced [2Fe-2S]-[ferredoxin] + O2 + 2 H(+) = rhizobitoxine + 2 oxidized [2Fe-2S]-[ferredoxin] + 2 H2O. Involved in the biosynthesis of the nodulation enhancer compound rhizobitoxine. Catalyzes the final step of the pathway, the introduction of a carbon double bond into the C3 position of dihydrorhizobitoxine to produce rhizobitoxine. The protein is Dihydrorhizobitoxine desaturase of Bradyrhizobium elkanii.